The following is a 154-amino-acid chain: SsrA-binding protein (154 aa).

Positions 134 to 154 (ETLRRRDAKREVERALKEKNR) are disordered.

The protein belongs to the SmpB family.

It is found in the cytoplasm. Required for rescue of stalled ribosomes mediated by trans-translation. Binds to transfer-messenger RNA (tmRNA), required for stable association of tmRNA with ribosomes. tmRNA and SmpB together mimic tRNA shape, replacing the anticodon stem-loop with SmpB. tmRNA is encoded by the ssrA gene; the 2 termini fold to resemble tRNA(Ala) and it encodes a 'tag peptide', a short internal open reading frame. During trans-translation Ala-aminoacylated tmRNA acts like a tRNA, entering the A-site of stalled ribosomes, displacing the stalled mRNA. The ribosome then switches to translate the ORF on the tmRNA; the nascent peptide is terminated with the 'tag peptide' encoded by the tmRNA and targeted for degradation. The ribosome is freed to recommence translation, which seems to be the essential function of trans-translation. The polypeptide is SsrA-binding protein (Halalkalibacterium halodurans (strain ATCC BAA-125 / DSM 18197 / FERM 7344 / JCM 9153 / C-125) (Bacillus halodurans)).